The chain runs to 203 residues: NADH-quinone oxidoreductase subunit C (203 aa).

It belongs to the complex I 30 kDa subunit family. As to quaternary structure, NDH-1 is composed of 14 different subunits. Subunits NuoB, C, D, E, F, and G constitute the peripheral sector of the complex.

It localises to the cell inner membrane. The enzyme catalyses a quinone + NADH + 5 H(+)(in) = a quinol + NAD(+) + 4 H(+)(out). NDH-1 shuttles electrons from NADH, via FMN and iron-sulfur (Fe-S) centers, to quinones in the respiratory chain. The immediate electron acceptor for the enzyme in this species is believed to be ubiquinone. Couples the redox reaction to proton translocation (for every two electrons transferred, four hydrogen ions are translocated across the cytoplasmic membrane), and thus conserves the redox energy in a proton gradient. The sequence is that of NADH-quinone oxidoreductase subunit C from Bartonella tribocorum (strain CIP 105476 / IBS 506).